Consider the following 278-residue polypeptide: Large ribosomal subunit protein uL2 (278 aa).

Residues 225 to 278 (MNPVDHPHGGGEGRTSGGRHPVTPWGKPTKGKKTRANKATDKYIVRSRHQKKKG) are disordered. The span at 269–278 (VRSRHQKKKG) shows a compositional bias: basic residues.

The protein belongs to the universal ribosomal protein uL2 family. Part of the 50S ribosomal subunit. Forms a bridge to the 30S subunit in the 70S ribosome.

In terms of biological role, one of the primary rRNA binding proteins. Required for association of the 30S and 50S subunits to form the 70S ribosome, for tRNA binding and peptide bond formation. It has been suggested to have peptidyltransferase activity; this is somewhat controversial. Makes several contacts with the 16S rRNA in the 70S ribosome. This Parvibaculum lavamentivorans (strain DS-1 / DSM 13023 / NCIMB 13966) protein is Large ribosomal subunit protein uL2.